We begin with the raw amino-acid sequence, 335 residues long: Trans-1,2-dihydrobenzene-1,2-diol dehydrogenase (335 aa).

The protein belongs to the Gfo/Idh/MocA family. In terms of assembly, homodimer. Liver, lens, spleen, kidney and small intestine.

The enzyme catalyses (1R,2R)-1,2-dihydrobenzene-1,2-diol + NADP(+) = catechol + NADPH + H(+). It carries out the reaction D-xylose + NADP(+) = D-xylono-1,5-lactone + NADPH + H(+). Its activity is regulated as follows. Strongly inhibited by isoascorbic acid, 4-hydroxyacetophenone and chloromercuriphenylsulphonate. Stimulated by various salts. The polypeptide is Trans-1,2-dihydrobenzene-1,2-diol dehydrogenase (DHDH) (Sus scrofa (Pig)).